Reading from the N-terminus, the 922-residue chain is Dual serine/threonine and tyrosine protein kinase (922 aa).

In terms of domain architecture, Protein kinase spans 645–899 (PKLGRELGRG…PLLGIVEPSL (255 aa)). Residues 651-659 (LGRGQYGVV) and Lys674 contribute to the ATP site. Asp770 (proton acceptor) is an active-site residue.

Belongs to the protein kinase superfamily. Ser/Thr protein kinase family.

It localises to the cytoplasm. Its subcellular location is the cell membrane. The protein resides in the apical cell membrane. It is found in the basolateral cell membrane. The protein localises to the cell junction. It catalyses the reaction L-seryl-[protein] + ATP = O-phospho-L-seryl-[protein] + ADP + H(+). It carries out the reaction L-threonyl-[protein] + ATP = O-phospho-L-threonyl-[protein] + ADP + H(+). The enzyme catalyses L-tyrosyl-[protein] + ATP = O-phospho-L-tyrosyl-[protein] + ADP + H(+). May act as a positive regulator of ERK phosphorylation downstream of fibroblast growth factor-receptor activation. May induce both caspase-dependent apoptosis and caspase-independent cell death. May play a role in the embryonic development. The protein is Dual serine/threonine and tyrosine protein kinase of Tetraodon nigroviridis (Spotted green pufferfish).